A 577-amino-acid polypeptide reads, in one-letter code: Arginine--tRNA ligase (577 aa).

The 'HIGH' region motif lies at 122-132 (PNVAKEMHVGH).

This sequence belongs to the class-I aminoacyl-tRNA synthetase family. Monomer.

The protein localises to the cytoplasm. The enzyme catalyses tRNA(Arg) + L-arginine + ATP = L-arginyl-tRNA(Arg) + AMP + diphosphate. The sequence is that of Arginine--tRNA ligase from Escherichia coli O81 (strain ED1a).